Reading from the N-terminus, the 159-residue chain is Phosphopantetheine adenylyltransferase (159 aa).

Substrate is bound at residue threonine 10. Residues 10 to 11 (TF) and histidine 18 contribute to the ATP site. Residues lysine 42, methionine 74, and arginine 88 each coordinate substrate. ATP is bound by residues 89–91 (GLR), glutamate 99, and 124–130 (WSFISSS).

This sequence belongs to the bacterial CoaD family. Homohexamer. It depends on Mg(2+) as a cofactor.

The protein localises to the cytoplasm. The enzyme catalyses (R)-4'-phosphopantetheine + ATP + H(+) = 3'-dephospho-CoA + diphosphate. It functions in the pathway cofactor biosynthesis; coenzyme A biosynthesis; CoA from (R)-pantothenate: step 4/5. Its function is as follows. Reversibly transfers an adenylyl group from ATP to 4'-phosphopantetheine, yielding dephospho-CoA (dPCoA) and pyrophosphate. The chain is Phosphopantetheine adenylyltransferase from Citrobacter koseri (strain ATCC BAA-895 / CDC 4225-83 / SGSC4696).